A 100-amino-acid chain; its full sequence is uncharacterized protein (100 aa).

The first 26 residues, 1 to 26 (MKRLLVSLRVWMVFLMNWVTPDRKTA), serve as a signal peptide directing secretion.

This is an uncharacterized protein from Bacillus subtilis (strain 168).